Reading from the N-terminus, the 490-residue chain is Protein twist (490 aa).

Disordered regions lie at residues 48-74 (QLQH…QHTQ), 98-167 (PSNE…TGGS), and 330-359 (LDGS…ETDE). Over residues 54 to 64 (QHLHSHQHHQQ) the composition is skewed to basic residues. Composition is skewed to low complexity over residues 65–74 (HQQQQQQHTQ) and 104–135 (STSS…NNPS). Over residues 339–351 (AFRKPRRRLKRKP) the composition is skewed to basic residues. The bHLH domain occupies 362–413 (NQRVMANVRERQRTQSLNDAFKSLQQIIPTLPSDKLSKIQTLKLATRYIDFL).

In terms of assembly, efficient DNA binding requires dimerization with another bHLH protein. Homodimer.

The protein localises to the nucleus. In terms of biological role, involved in the establishment and dorsoventral patterning of germ layers in the embryo. This is Protein twist from Drosophila erecta (Fruit fly).